Reading from the N-terminus, the 140-residue chain is Seminal plasma protein A3 (140 aa).

The N-terminal stretch at 1 to 25 (MALRLGLFLIWAGVSMFLQLDPVNG) is a signal peptide. Fibronectin type-II domains lie at 49 to 93 (TKDN…YCTK) and 94 to 140 (NDYA…WKYC). 4 disulfides stabilise this stretch: Cys-54–Cys-78, Cys-68–Cys-91, Cys-99–Cys-125, and Cys-113–Cys-140.

The protein belongs to the seminal plasma protein family.

The protein localises to the secreted. The BSP-A proteins from seminal plasma exhibit both simulatory and inhibitory actions on the release of pituitary gonadotropins. The exact function of these proteins is not known. In Bos taurus (Bovine), this protein is Seminal plasma protein A3.